A 298-amino-acid chain; its full sequence is MLYQQISQNKQRTVVLLVVFFALLALIGASAGYLLLDNYAMGLVLALVIGMIYATSMIFQSTSLVMSMNNAREVTEKEAPGFFHIVEDMAMVAQIPMPRVFIIEDPSLNAFATGSSPQNAAVAATTGLLEVMNREELEGVIGHEISHIRNYDIRISTIAVALASAVTVISSIGGRMLWYGGGSRRQRDDGDDDVLRIITLLLSLLSLLLAPLVASLIQLAISRQREYLADASSVELTRNPQGMIKALEKLQLSQPMKHPVDDASAALYINEPRKKRSFSSLFSTHPPIEERIERLKNM.

Transmembrane regions (helical) follow at residues 14-34 (VVLLVVFFALLALIGASAGYL) and 39-59 (YAMGLVLALVIGMIYATSMIF). Histidine 143 contacts Zn(2+). Residue glutamate 144 is part of the active site. Residue histidine 147 participates in Zn(2+) binding. 2 helical membrane-spanning segments follow: residues 158-178 (IAVALASAVTVISSIGGRMLW) and 197-217 (IITLLLSLLSLLLAPLVASLI). Residue glutamate 226 coordinates Zn(2+).

Belongs to the peptidase M48B family. It depends on Zn(2+) as a cofactor.

It is found in the cell membrane. This Streptococcus pyogenes serotype M49 (strain NZ131) protein is Protease HtpX homolog.